The sequence spans 401 residues: (1R,4R,5S)-(-)-guaia-6,10(14)-diene synthase (401 aa).

Residues 1–21 (MVKFDSGSESEMTNGDDLHIN) are disordered. 2 residues coordinate Mg(2+): D134 and E139. The DDXXD motif signature appears at 134-138 (DDQFD). R242 contributes to the substrate binding site. N288 and S292 together coordinate Mg(2+). K295 lines the substrate pocket. D296 is a binding site for Mg(2+). Residue 375–376 (RY) participates in substrate binding.

It belongs to the terpene synthase family. The cofactor is Mg(2+).

The catalysed reaction is (2E,6E)-farnesyl diphosphate = (1R,4R,5S)-(-)-guaia-6,10(14)-diene + diphosphate. It participates in secondary metabolite biosynthesis; terpenoid biosynthesis. Functionally, catalyzes the conversion of (2E,6E)-farnesyl diphosphate (FPP) to yield the bicyclic sesquiterpene guaia-6,10(14)-diene via a 1,10-cyclization, which requires the abstraction of the pyrophosphate from FPP to yield the (E,E)-germacradienyl cation. The only accepted substrate is farnesyl diphosphate (FPP). This Fusarium proliferatum (strain ET1) (Orchid endophyte fungus) protein is (1R,4R,5S)-(-)-guaia-6,10(14)-diene synthase.